A 314-amino-acid polypeptide reads, in one-letter code: MIOREX complex component 8 (314 aa).

The region spanning 132–312 (TLPEVIFLGG…RYVIFQSCGL (181 aa)) is the EngB-type G domain. GTP contacts are provided by residues 140–147 (GGTNVGKS), 173–177 (GFTKT), 191–194 (DSPG), 253–256 (TKMD), and 290–292 (SST). Residues Ser-147 and Thr-175 each coordinate Mg(2+).

The protein belongs to the TRAFAC class TrmE-Era-EngA-EngB-Septin-like GTPase superfamily. EngB GTPase family. In terms of assembly, associates with the mitochondrial ribosome. Mg(2+) is required as a cofactor. In terms of processing, sumoylated upon ethanol stress.

The protein localises to the mitochondrion. In terms of biological role, component of MIOREX complexes, large expressome-like assemblies of ribosomes with factors involved in all the steps of post-transcriptional gene expression. The sequence is that of MIOREX complex component 8 from Saccharomyces cerevisiae (strain ATCC 204508 / S288c) (Baker's yeast).